The sequence spans 220 residues: Photosynthetic NDH subunit of lumenal location 3, chloroplastic (220 aa).

Residues 1–35 (MAHFIDLNSLTNTLPSLPKLPESRKTGKSSGFACR) constitute a chloroplast transit peptide. A thylakoid-targeting transit peptide spans 36–77 (RTEEFQEPDSVQITRRMTLGFAVSIGLTGILGENNVSLAQDN).

It belongs to the PsbQ family. As to quaternary structure, part of the chloroplast NDH complex, composed of a mixture of chloroplast and nucleus encoded subunits. Component of the NDH lumenal subcomplex, at least composed of PnsL1, PnsL2, PnsL3, PnsL4 and PnsL5.

The protein resides in the plastid. The protein localises to the chloroplast thylakoid membrane. Functionally, NDH shuttles electrons from NAD(P)H:plastoquinone, via FMN and iron-sulfur (Fe-S) centers, to quinones in the photosynthetic chain and possibly in a chloroplast respiratory chain. The immediate electron acceptor for the enzyme in this species is believed to be plastoquinone. Couples the redox reaction to proton translocation, and thus conserves the redox energy in a proton gradient. Required for both formation and activity of the chloroplast NAD(P)H dehydrogenase (NDH) complex. The sequence is that of Photosynthetic NDH subunit of lumenal location 3, chloroplastic from Arabidopsis thaliana (Mouse-ear cress).